Reading from the N-terminus, the 330-residue chain is Aspartate--ammonia ligase (330 aa).

It belongs to the class-II aminoacyl-tRNA synthetase family. AsnA subfamily.

Its subcellular location is the cytoplasm. It carries out the reaction L-aspartate + NH4(+) + ATP = L-asparagine + AMP + diphosphate + H(+). Its pathway is amino-acid biosynthesis; L-asparagine biosynthesis; L-asparagine from L-aspartate (ammonia route): step 1/1. This Escherichia coli (strain SMS-3-5 / SECEC) protein is Aspartate--ammonia ligase.